We begin with the raw amino-acid sequence, 360 residues long: MTSAALAPSSAAPAGAGAAPRSRAAVRRWLFAMAALVIAMVAVGGATRLTGSGLSITEWKPVTGAIPPLSAEAWTEEFAKYRATPQYDILNRGMSLAEFQVIYAWEWGHRFLGRLIGFAFFLPLGWFWWTGRLDRRLGLGLLGLGVLGGLQGAVGWIMVASGLQPGMTAVAPIKLAAHLTLASAIFAGLVWLAAGLDRAPDEPLPRRLRLTALALPLLMLVQIALGGLVAGSKAGLTYNTWPLMDGAFIPPLSGLFAVTPWIENFVDNVALVQLNHRLAAYGLLAVAALHWLDLFRTRPGSRAAKRAGAILGLVTAQAALGITTLLLAVPLWAGLAHQVTAMLVLGMAAVHARIATLSRA.

A run of 9 helical transmembrane segments spans residues 29–49 (WLFAMAALVIAMVAVGGATRL), 111–131 (FLGRLIGFAFFLPLGWFWWTG), 139–159 (LGLLGLGVLGGLQGAVGWIMV), 175–195 (LAAHLTLASAIFAGLVWLAAG), 210–230 (LTALALPLLMLVQIALGGLVA), 242–262 (PLMDGAFIPPLSGLFAVTPWI), 269–289 (VALVQLNHRLAAYGLLAVAAL), 309–329 (AILGLVTAQAALGITTLLLAV), and 330–350 (PLWAGLAHQVTAMLVLGMAAV). Residue His-276 participates in heme binding. His-337 contacts heme.

Belongs to the COX15/CtaA family. Type 2 subfamily. In terms of assembly, interacts with CtaB. Requires heme b as cofactor.

Its subcellular location is the cell membrane. The enzyme catalyses Fe(II)-heme o + 2 A + H2O = Fe(II)-heme a + 2 AH2. The protein operates within porphyrin-containing compound metabolism; heme A biosynthesis; heme A from heme O: step 1/1. Its function is as follows. Catalyzes the conversion of heme O to heme A by two successive hydroxylations of the methyl group at C8. The first hydroxylation forms heme I, the second hydroxylation results in an unstable dihydroxymethyl group, which spontaneously dehydrates, resulting in the formyl group of heme A. The sequence is that of Heme A synthase from Methylobacterium nodulans (strain LMG 21967 / CNCM I-2342 / ORS 2060).